Consider the following 117-residue polypeptide: UPF0122 protein TTE1463 (117 aa).

The protein belongs to the UPF0122 family.

Its function is as follows. Might take part in the signal recognition particle (SRP) pathway. This is inferred from the conservation of its genetic proximity to ftsY/ffh. May be a regulatory protein. This is UPF0122 protein TTE1463 from Caldanaerobacter subterraneus subsp. tengcongensis (strain DSM 15242 / JCM 11007 / NBRC 100824 / MB4) (Thermoanaerobacter tengcongensis).